We begin with the raw amino-acid sequence, 85 residues long: Beta-insect depressant toxin BmKITb (85 aa).

Positions 1–21 are cleaved as a signal peptide; it reads MKLFLLLVISASMLIDGLVNA. The LCN-type CS-alpha/beta domain occupies 22-82; it reads DGYIRGSNGC…TWKSESNTCG (61 aa). 4 disulfide bridges follow: Cys-31–Cys-81, Cys-35–Cys-56, Cys-42–Cys-63, and Cys-46–Cys-65. At Gly-82 the chain carries Glycine amide.

Expressed by the venom gland.

The protein resides in the secreted. Functionally, depressant insect beta-toxins cause a transient contraction paralysis followed by a slow flaccid paralysis. They bind voltage-independently at site-4 of sodium channels (Nav) and shift the voltage of activation toward more negative potentials thereby affecting sodium channel activation and promoting spontaneous and repetitive firing. However, this toxin has some characteristics of excitatory toxins such as bursts of activity after the membrane has been hyperpolarized. This toxin is active only on insects. This chain is Beta-insect depressant toxin BmKITb, found in Olivierus martensii (Manchurian scorpion).